We begin with the raw amino-acid sequence, 556 residues long: 2-succinyl-5-enolpyruvyl-6-hydroxy-3-cyclohexene-1-carboxylate synthase (556 aa).

This sequence belongs to the TPP enzyme family. MenD subfamily. Homodimer. Mg(2+) serves as cofactor. Mn(2+) is required as a cofactor. It depends on thiamine diphosphate as a cofactor.

The enzyme catalyses isochorismate + 2-oxoglutarate + H(+) = 5-enolpyruvoyl-6-hydroxy-2-succinyl-cyclohex-3-ene-1-carboxylate + CO2. It participates in quinol/quinone metabolism; 1,4-dihydroxy-2-naphthoate biosynthesis; 1,4-dihydroxy-2-naphthoate from chorismate: step 2/7. It functions in the pathway quinol/quinone metabolism; menaquinone biosynthesis. Functionally, catalyzes the thiamine diphosphate-dependent decarboxylation of 2-oxoglutarate and the subsequent addition of the resulting succinic semialdehyde-thiamine pyrophosphate anion to isochorismate to yield 2-succinyl-5-enolpyruvyl-6-hydroxy-3-cyclohexene-1-carboxylate (SEPHCHC). The protein is 2-succinyl-5-enolpyruvyl-6-hydroxy-3-cyclohexene-1-carboxylate synthase of Salmonella choleraesuis (strain SC-B67).